The primary structure comprises 93 residues: Cobalt transport protein CbiN (93 aa).

2 helical membrane passes run 5 to 25 (LILL…NHGG) and 63 to 83 (LLFT…LGYA).

Belongs to the CbiN family. In terms of assembly, forms an energy-coupling factor (ECF) transporter complex composed of an ATP-binding protein (A component, CbiO), a transmembrane protein (T component, CbiQ) and 2 possible substrate-capture proteins (S components, CbiM and CbiN) of unknown stoichimetry.

The protein localises to the cell inner membrane. It participates in cofactor biosynthesis; adenosylcobalamin biosynthesis. In terms of biological role, part of the energy-coupling factor (ECF) transporter complex CbiMNOQ involved in cobalt import. The sequence is that of Cobalt transport protein CbiN from Klebsiella pneumoniae subsp. pneumoniae (strain ATCC 700721 / MGH 78578).